Consider the following 318-residue polypeptide: Mediator of RNA polymerase II transcription subunit 3 (318 aa).

Over residues 134 to 156 (SAAGITKTSSGNDGNTTGSTANT) the composition is skewed to polar residues. The disordered stretch occupies residues 134-225 (SAAGITKTSS…PSLKQIPNTQ (92 aa)). A compositionally biased stretch (low complexity) spans 192-217 (HTGPATAPTTSNSAASAAAAAANTPS).

It belongs to the Mediator complex subunit 3 family. As to quaternary structure, component of the Mediator complex.

It is found in the nucleus. Component of the Mediator complex, a coactivator involved in regulated gene transcription of nearly all RNA polymerase II-dependent genes. Mediator functions as a bridge to convey information from gene-specific regulatory proteins to the basal RNA polymerase II transcription machinery. Mediator is recruited to promoters by direct interactions with regulatory proteins and serves as a scaffold for the assembly of a functional preinitiation complex with RNA polymerase II and the general transcription factors. In Kluyveromyces lactis (strain ATCC 8585 / CBS 2359 / DSM 70799 / NBRC 1267 / NRRL Y-1140 / WM37) (Yeast), this protein is Mediator of RNA polymerase II transcription subunit 3 (PGD1).